The following is a 377-amino-acid chain: Queuine tRNA-ribosyltransferase (377 aa).

Residue D94 is the Proton acceptor of the active site. Residues 94-98 (DSGGF), D148, Q191, and G218 contribute to the substrate site. The interval 249-255 (GVGTPDD) is RNA binding. Catalysis depends on D268, which acts as the Nucleophile. The tract at residues 273 to 277 (TRAGR) is RNA binding; important for wobble base 34 recognition.

This sequence belongs to the queuine tRNA-ribosyltransferase family. As to quaternary structure, homodimer. Within each dimer, one monomer is responsible for RNA recognition and catalysis, while the other monomer binds to the replacement base PreQ1.

It catalyses the reaction 7-aminomethyl-7-carbaguanine + guanosine(34) in tRNA = 7-aminomethyl-7-carbaguanosine(34) in tRNA + guanine. It participates in tRNA modification; tRNA-queuosine biosynthesis. Its function is as follows. Catalyzes the base-exchange of a guanine (G) residue with the queuine precursor 7-aminomethyl-7-deazaguanine (PreQ1) at position 34 (anticodon wobble position) in tRNAs with GU(N) anticodons (tRNA-Asp, -Asn, -His and -Tyr). Catalysis occurs through a double-displacement mechanism. The nucleophile active site attacks the C1' of nucleotide 34 to detach the guanine base from the RNA, forming a covalent enzyme-RNA intermediate. The proton acceptor active site deprotonates the incoming PreQ1, allowing a nucleophilic attack on the C1' of the ribose to form the product. After dissociation, two additional enzymatic reactions on the tRNA convert PreQ1 to queuine (Q), resulting in the hypermodified nucleoside queuosine (7-(((4,5-cis-dihydroxy-2-cyclopenten-1-yl)amino)methyl)-7-deazaguanosine). This is Queuine tRNA-ribosyltransferase from Brucella melitensis biotype 1 (strain ATCC 23456 / CCUG 17765 / NCTC 10094 / 16M).